Reading from the N-terminus, the 413-residue chain is Serine hydroxymethyltransferase (413 aa).

(6S)-5,6,7,8-tetrahydrofolate contacts are provided by residues Leu119 and 123 to 125; that span reads GHL. Lys228 is subject to N6-(pyridoxal phosphate)lysine. Position 351–353 (351–353) interacts with (6S)-5,6,7,8-tetrahydrofolate; that stretch reads SPF.

Belongs to the SHMT family. Homodimer. The cofactor is pyridoxal 5'-phosphate.

The protein localises to the cytoplasm. It carries out the reaction (6R)-5,10-methylene-5,6,7,8-tetrahydrofolate + glycine + H2O = (6S)-5,6,7,8-tetrahydrofolate + L-serine. Its pathway is one-carbon metabolism; tetrahydrofolate interconversion. It functions in the pathway amino-acid biosynthesis; glycine biosynthesis; glycine from L-serine: step 1/1. Its function is as follows. Catalyzes the reversible interconversion of serine and glycine with tetrahydrofolate (THF) serving as the one-carbon carrier. This reaction serves as the major source of one-carbon groups required for the biosynthesis of purines, thymidylate, methionine, and other important biomolecules. Also exhibits THF-independent aldolase activity toward beta-hydroxyamino acids, producing glycine and aldehydes, via a retro-aldol mechanism. This chain is Serine hydroxymethyltransferase, found in Clostridium botulinum (strain ATCC 19397 / Type A).